An 873-amino-acid polypeptide reads, in one-letter code: Alanine--tRNA ligase (873 aa).

4 residues coordinate Zn(2+): histidine 559, histidine 563, cysteine 661, and histidine 665.

Belongs to the class-II aminoacyl-tRNA synthetase family. It depends on Zn(2+) as a cofactor.

The protein resides in the cytoplasm. The catalysed reaction is tRNA(Ala) + L-alanine + ATP = L-alanyl-tRNA(Ala) + AMP + diphosphate. Its function is as follows. Catalyzes the attachment of alanine to tRNA(Ala) in a two-step reaction: alanine is first activated by ATP to form Ala-AMP and then transferred to the acceptor end of tRNA(Ala). Also edits incorrectly charged Ser-tRNA(Ala) and Gly-tRNA(Ala) via its editing domain. In Acaryochloris marina (strain MBIC 11017), this protein is Alanine--tRNA ligase.